The following is a 201-amino-acid chain: Small ribosomal subunit protein uS4c (201 aa).

The segment at 20-39 (GLTRKTPKSGSNLKKKFHSG) is disordered. In terms of domain architecture, S4 RNA-binding spans 89-150 (MRLDNILFRL…NQRSKRLVQN (62 aa)).

Belongs to the universal ribosomal protein uS4 family. In terms of assembly, part of the 30S ribosomal subunit. Contacts protein S5. The interaction surface between S4 and S5 is involved in control of translational fidelity.

The protein resides in the plastid. It localises to the chloroplast. Functionally, one of the primary rRNA binding proteins, it binds directly to 16S rRNA where it nucleates assembly of the body of the 30S subunit. With S5 and S12 plays an important role in translational accuracy. The chain is Small ribosomal subunit protein uS4c (rps4) from Oryza nivara (Indian wild rice).